The following is a 332-amino-acid chain: UPF0194 membrane protein YbhG (332 aa).

A signal peptide spans 1 to 16; the sequence is MMKKPVVIGLAVVVLA. The stretch at 108 to 209 forms a coiled coil; sequence EEIAQAAAAV…LNLQDSTLIA (102 aa).

It belongs to the UPF0194 family.

The protein localises to the periplasm. The protein is UPF0194 membrane protein YbhG of Shigella boydii serotype 4 (strain Sb227).